The following is a 449-amino-acid chain: Signal recognition particle protein (449 aa).

Residues 109-116 (GLQGGGKT), 191-195 (DTAGR), and 249-252 (SRID) each bind GTP.

This sequence belongs to the GTP-binding SRP family. SRP54 subfamily. As to quaternary structure, part of the signal recognition particle protein translocation system, which is composed of SRP and FtsY. SRP is a ribonucleoprotein composed of Ffh and a 4.5S RNA molecule.

It localises to the cytoplasm. The enzyme catalyses GTP + H2O = GDP + phosphate + H(+). Functionally, involved in targeting and insertion of nascent membrane proteins into the cytoplasmic membrane. Binds to the hydrophobic signal sequence of the ribosome-nascent chain (RNC) as it emerges from the ribosomes. The SRP-RNC complex is then targeted to the cytoplasmic membrane where it interacts with the SRP receptor FtsY. Interaction with FtsY leads to the transfer of the RNC complex to the Sec translocase for insertion into the membrane, the hydrolysis of GTP by both Ffh and FtsY, and the dissociation of the SRP-FtsY complex into the individual components. This is Signal recognition particle protein from Rickettsia prowazekii (strain Madrid E).